We begin with the raw amino-acid sequence, 93 residues long: Large ribosomal subunit protein uL23c (93 aa).

Belongs to the universal ribosomal protein uL23 family. In terms of assembly, part of the 50S ribosomal subunit.

Its subcellular location is the plastid. The protein resides in the chloroplast. Functionally, binds to 23S rRNA. This is Large ribosomal subunit protein uL23c (rpl23) from Fragaria ananassa (Strawberry).